The primary structure comprises 74 residues: UPF0435 protein GK0418 (74 aa).

The protein belongs to the UPF0435 family.

In Geobacillus kaustophilus (strain HTA426), this protein is UPF0435 protein GK0418.